A 120-amino-acid polypeptide reads, in one-letter code: Glycine cleavage system H protein (120 aa).

Residues 17-99 (VATVGITAHA…QGGGWLYRLK (83 aa)) form the Lipoyl-binding domain. Residue lysine 58 is modified to N6-lipoyllysine.

The protein belongs to the GcvH family. As to quaternary structure, the glycine cleavage system is composed of four proteins: P, T, L and H. (R)-lipoate is required as a cofactor.

Its function is as follows. The glycine cleavage system catalyzes the degradation of glycine. The H protein shuttles the methylamine group of glycine from the P protein to the T protein. This is Glycine cleavage system H protein from Methylorubrum extorquens (strain CM4 / NCIMB 13688) (Methylobacterium extorquens).